A 951-amino-acid polypeptide reads, in one-letter code: UvrABC system protein A (951 aa).

Residue 33–40 coordinates ATP; sequence GLSGSGKS. The C4-type zinc-finger motif lies at 252–279; the sequence is CPICGFTVGELEPRLFSFNAPQGACPDC. 2 consecutive ABC transporter domains span residues 309 to 587 and 607 to 935; these read WNPI…RKSL and GNGK…QYLK. 639–646 provides a ligand contact to ATP; the sequence is GVSGSGKS. The segment at 738–764 adopts a C4-type zinc-finger fold; the sequence is CEACHGDGILKIEMNFLPDVFVPCEVC.

Belongs to the ABC transporter superfamily. UvrA family. In terms of assembly, forms a heterotetramer with UvrB during the search for lesions.

The protein localises to the cytoplasm. Its function is as follows. The UvrABC repair system catalyzes the recognition and processing of DNA lesions. UvrA is an ATPase and a DNA-binding protein. A damage recognition complex composed of 2 UvrA and 2 UvrB subunits scans DNA for abnormalities. When the presence of a lesion has been verified by UvrB, the UvrA molecules dissociate. The chain is UvrABC system protein A from Lactiplantibacillus plantarum (strain ATCC BAA-793 / NCIMB 8826 / WCFS1) (Lactobacillus plantarum).